The sequence spans 239 residues: Uridylate kinase (239 aa).

Position 10–13 (10–13) interacts with ATP; it reads KISG. Positions 18–23 are involved in allosteric activation by GTP; it reads GESGYG. Position 52 (Gly-52) interacts with UMP. Residues Gly-53 and Arg-57 each coordinate ATP. UMP contacts are provided by residues Asp-72 and 133–140; that span reads TGNPYFTT. ATP-binding residues include Thr-160, Tyr-166, and Asp-169.

This sequence belongs to the UMP kinase family. As to quaternary structure, homohexamer.

It localises to the cytoplasm. The enzyme catalyses UMP + ATP = UDP + ADP. Its pathway is pyrimidine metabolism; CTP biosynthesis via de novo pathway; UDP from UMP (UMPK route): step 1/1. Allosterically activated by GTP. Inhibited by UTP. Catalyzes the reversible phosphorylation of UMP to UDP. This is Uridylate kinase from Chlorobaculum tepidum (strain ATCC 49652 / DSM 12025 / NBRC 103806 / TLS) (Chlorobium tepidum).